The chain runs to 455 residues: MSPTLDDQSPMEIRCTEEGAGPGIFRMELGDQRQSISQSQRWCCLQRGCVILGVLGLLAGAGIASWLLVLYLWPAASPSISGTLQEEEMTLNCPGVSREEELLPSLPKTVSFRINGEDLLLQVQVRARPDWLLVCHEGWSPALGMHICKSLGHIRLTQHKAVNLSDIKLNRSQEFAQLSARPGGLVEESWKPSANCPSGRIVSLKCSECGARPLASRIVGGQAVASGRWPWQASVMLGSRHTCGASVLAPHWVVTAAHCMYSFRLSRLSSWRVHAGLVSHGAVRQHQGTMVEKIIPHPLYSAQNHDYDVALLQLRTPINFSDTVGAVCLPAKEQHFPWGSQCWVSGWGHTDPSHTHSSDTLQDTMVPLLSTYLCNSSCMYSGALTHRMLCAGYLDGRADACQGDSGGPLVCPSGDTWHLVGVVSWGRGCAEPNRPGVYAKVAEFLDWIHDTVQVR.

Topologically, residues 1–49 (MSPTLDDQSPMEIRCTEEGAGPGIFRMELGDQRQSISQSQRWCCLQRGC) are cytoplasmic. A helical; Signal-anchor for type II membrane protein transmembrane segment spans residues 50 to 70 (VILGVLGLLAGAGIASWLLVL). Topologically, residues 71-455 (YLWPAASPSI…DWIHDTVQVR (385 aa)) are extracellular. One can recognise an SRCR domain in the interval 112–207 (FRINGEDLLL…SGRIVSLKCS (96 aa)). 7 cysteine pairs are disulfide-bonded: Cys-135–Cys-196, Cys-148–Cys-206, Cys-209–Cys-328, Cys-243–Cys-259, Cys-342–Cys-411, Cys-374–Cys-390, and Cys-401–Cys-429. Asn-163 and Asn-170 each carry an N-linked (GlcNAc...) asparagine glycan. Residues 218–453 (IVGGQAVASG…FLDWIHDTVQ (236 aa)) form the Peptidase S1 domain. Catalysis depends on charge relay system residues His-258 and Asp-308. Asn-319 and Asn-375 each carry an N-linked (GlcNAc...) asparagine glycan. Ser-405 (charge relay system) is an active-site residue.

Belongs to the peptidase S1 family.

Its subcellular location is the cell membrane. Its function is as follows. May play a role in hearing. This Mus musculus (Mouse) protein is Transmembrane protease serine 5 (Tmprss5).